A 131-amino-acid chain; its full sequence is Holo-[acyl-carrier-protein] synthase (131 aa).

Aspartate 8 and glutamate 63 together coordinate Mg(2+).

It belongs to the P-Pant transferase superfamily. AcpS family. Mg(2+) serves as cofactor.

It is found in the cytoplasm. The enzyme catalyses apo-[ACP] + CoA = holo-[ACP] + adenosine 3',5'-bisphosphate + H(+). Its function is as follows. Transfers the 4'-phosphopantetheine moiety from coenzyme A to a Ser of acyl-carrier-protein. The protein is Holo-[acyl-carrier-protein] synthase of Shewanella piezotolerans (strain WP3 / JCM 13877).